Consider the following 338-residue polypeptide: uncharacterized protein (338 aa).

A Radical SAM core domain is found at 111–334 (HLGEERVLVP…LELAEKYNLD (224 aa)). Positions 129, 133, and 136 each coordinate [4Fe-4S] cluster.

Requires [4Fe-4S] cluster as cofactor.

This is an uncharacterized protein from Methanocaldococcus jannaschii (strain ATCC 43067 / DSM 2661 / JAL-1 / JCM 10045 / NBRC 100440) (Methanococcus jannaschii).